Here is an 84-residue protein sequence, read N- to C-terminus: Gas vesicle protein M1 (84 aa).

The interval 1–25 (MEPTKDETHAIVEFVDVLLRDGAVI) is interacts with GvpL1. An alpha helix 1 region spans residues 5 to 21 (KDETHAIVEFVDVLLRD). Beta-strand regions lie at residues 27–29 (ADV) and 41–43 (ISL). Residues 44–48 (RAAIA) carry the Conserved in GvpJ1/2 but not GvpA motif. 2 alpha helix regions span residues 46 to 56 (AIAGMTTMTEY) and 62 to 84 (WDAAHRQQSEAFTTSPTADRRED).

It belongs to the gas vesicle GvpA family. In terms of assembly, gvpF to GvpM interact with each other in vitro, and may form multi-subunit complex(es). Might interact with GvpA1.

The protein resides in the gas vesicle. Proteins GvpF to GvpM might be involved in nucleating gas vesicle formation. A minor component of the gas vesicle. Gas vesicles are hollow, gas filled proteinaceous nanostructures found in several microbial planktonic microorganisms. They allow positioning of halobacteria at the optimal depth for growth in the poorly aerated, shallow brine pools of their habitat. In terms of biological role, expression of a 9.5 kb p-vac DNA fragment containing 2 divergently transcribed regions (gvpD-gvpE-gvpF-gvpG-gvpH-gvpI-gvpJ-gvpK-gvpL-gvpM and gvpA-gvpC-gvpN-gvpO) allows H.volcanii to produce gas vesicles. All site-directed mutagenesis is tested in H.volcanii. A minimal gas vesicle can be made in H.volcanii by gvpA1-gvpO1 plus gvpF1-gvpG1-gvpJ1-gvpK1-gvpL1-gvpM1; lack of enough GvpJ1 prevents formation. A similar region restores gas vesicle production in H.halobium without the p-vac locus, but it still has the c-vac locus. This is Gas vesicle protein M1 (gvpM11) from Halobacterium salinarum (strain ATCC 700922 / JCM 11081 / NRC-1) (Halobacterium halobium).